We begin with the raw amino-acid sequence, 404 residues long: Cysteine desulfurase IscS (404 aa).

Pyridoxal 5'-phosphate is bound by residues 75 to 76 (AT), Asn155, Gln183, and 203 to 205 (SAH). At Lys206 the chain carries N6-(pyridoxal phosphate)lysine. Thr243 is a binding site for pyridoxal 5'-phosphate. Catalysis depends on Cys328, which acts as the Cysteine persulfide intermediate. [2Fe-2S] cluster is bound at residue Cys328.

It belongs to the class-V pyridoxal-phosphate-dependent aminotransferase family. NifS/IscS subfamily. Homodimer. Forms a heterotetramer with IscU, interacts with other sulfur acceptors. It depends on pyridoxal 5'-phosphate as a cofactor.

The protein resides in the cytoplasm. The enzyme catalyses (sulfur carrier)-H + L-cysteine = (sulfur carrier)-SH + L-alanine. Its pathway is cofactor biosynthesis; iron-sulfur cluster biosynthesis. Its function is as follows. Master enzyme that delivers sulfur to a number of partners involved in Fe-S cluster assembly, tRNA modification or cofactor biosynthesis. Catalyzes the removal of elemental sulfur atoms from cysteine to produce alanine. Functions as a sulfur delivery protein for Fe-S cluster synthesis onto IscU, an Fe-S scaffold assembly protein, as well as other S acceptor proteins. The chain is Cysteine desulfurase IscS from Shewanella woodyi (strain ATCC 51908 / MS32).